The sequence spans 991 residues: DTSEFDPLANKEYTEEQKQTEEQEQKEFLSHTTTPALEADDGFIVTSASFAQSTPSMSALSGNISPDSQTSDPITKAVRETIIQPQKDNLIEQILKDLAALTDRDLAEQKRKEIEEEKEKDKTLSTFFGNPANREFIDKALENPELKKKLESIEIAGYKNVHNTFSAASGYPGGFKPVQWENHVSASDLRATVVKNDAGDELCTLNETTVKTKPFTLAKQDGTQVQISSYREIDFPIKLDKADGSMHLSMVALKADGTKPSKDKAVYFTAHYEEGPNGKPQLKEISSPKPLKFAGTGDDAIAYIEHGGEIYTLAVTRGKYKEMMKEVELNQGQSVDLSQAEDIIIGQGQSKEQPLITPQQTTSSSVEPPQYKQQVPPITPTNQPLQPETSQMLQSQQVNPNLLNTATALSGSMQDLLNYVNAGLTKEIDSNKQIDLIKEAATAILNNEKSDIAEKQANIIALAENTVNNKNLKPDAKVAGVNAVLETIKNDQNTPNLEKSKMLEATVAIILNSENLEPNQKQQMLEKAVDVGLSLKDDASRAVTIDGIKDVVIKTNLLSNTEKQKLLGSVLKKGVEAQVLSPAQQQLMQQHLDKITAEQIKKDTIKKVNDILFDPLSNTELKTTNIQAITSNVLDGPATAEVKGEIIQEITNTVAGSSLEAQDKAAIIKGVGETIATHSDTSLSLPNKALIMASAEKGIAESQTNLPDRELMTKGLVDGIYEGKGGPEITKAVSSGIDNSNINDSEKEALKKAKDAASEAALDRDTQNLTEGFKGQNIEEHKPHDDIYNKAREVINAVNPVIEALEKSKEPVVSAEERIVHETSSILNNISKLAVEKVNNFRAMLSPNGNLKTLAEKKEESIKKVDELVKAFGTKSSTEEQQSFIKTNLIDDKTLSKEVRLQTIDKLLQEQKRAEAIENPSVKTEDVRVVSGKSKLKPISKDNPDIEKAKMVVGRDRVNIKGNIKIMGALMNARDIIQSENLNKSTPIKRE.

Disordered stretches follow at residues 1–37 (DTSE…TPAL), 54–73 (TPSM…TSDP), and 348–384 (GQSK…TNQP). Positions 12–29 (EYTEEQKQTEEQEQKEFL) are enriched in basic and acidic residues. Polar residues predominate over residues 348 to 373 (GQSKEQPLITPQQTTSSSVEPPQYKQ).

The protein localises to the cytoplasm. This chain is Antigenic heat-stable 120 kDa protein (sca4), found in Rickettsia sibirica.